A 343-amino-acid chain; its full sequence is N-acetyl-gamma-glutamyl-phosphate reductase (343 aa).

C147 is an active-site residue.

Belongs to the NAGSA dehydrogenase family. Type 1 subfamily.

The protein localises to the cytoplasm. The enzyme catalyses N-acetyl-L-glutamate 5-semialdehyde + phosphate + NADP(+) = N-acetyl-L-glutamyl 5-phosphate + NADPH + H(+). The protein operates within amino-acid biosynthesis; L-arginine biosynthesis; N(2)-acetyl-L-ornithine from L-glutamate: step 3/4. Catalyzes the NADPH-dependent reduction of N-acetyl-5-glutamyl phosphate to yield N-acetyl-L-glutamate 5-semialdehyde. The protein is N-acetyl-gamma-glutamyl-phosphate reductase of Listeria monocytogenes serotype 4b (strain CLIP80459).